Here is a 212-residue protein sequence, read N- to C-terminus: Ras-related protein Rab-2A (212 aa).

N-acetylalanine is present on A2. The required for interaction with PRKCI stretch occupies residues 2–19 (AYAYLFKYIIIGDTGVGK). GTP contacts are provided by G16, V17, G18, K19, S20, C21, and T38. S20 serves as a coordination point for Mg(2+). A Switch 1 motif is present at residues 37-42 (LTMGVE). The Mg(2+) site is built by T38 and D61. Positions 63-72 (AGQESFRSIT) match the Switch 2 motif. The GTP site is built by G64, N119, K120, D122, A150, and K151. The interval 190-212 (QHAATNASHGGNQGGQQAGGGCC) is disordered. Gly residues predominate over residues 200-212 (GNQGGQQAGGGCC). S-geranylgeranyl cysteine attachment occurs at residues C211 and C212.

The protein belongs to the small GTPase superfamily. Rab family. In terms of assembly, interacts with PRKCI. Interacts with TRIP11. Interacts (in GTP-bound form) with GARIN1B. Interacts (GTP-bound) with HOPS complex component VPS39; interaction contributes to obtaining a functional HOPS complex that promotes autophagosome-lysosome membrane fusion driven by STX17-SNAP29-VAMP8. May interact with VPS41. Mg(2+) is required as a cofactor. Post-translationally, prenylated. Prenylation is required for association with cellular membranes.

The protein resides in the endoplasmic reticulum-Golgi intermediate compartment membrane. It is found in the melanosome. It localises to the endoplasmic reticulum membrane. The protein localises to the golgi apparatus membrane. Its subcellular location is the cytoplasmic vesicle. The protein resides in the secretory vesicle. It is found in the acrosome. It localises to the autophagosome membrane. It catalyses the reaction GTP + H2O = GDP + phosphate + H(+). Its activity is regulated as follows. Regulated by guanine nucleotide exchange factors (GEFs) which promote the exchange of bound GDP for free GTP, GTPase activating proteins (GAPs) which increase the GTP hydrolysis activity, and GDP dissociation inhibitors (GDIs) which inhibit the dissociation of the nucleotide from the GTPase. Its function is as follows. The small GTPases Rab are key regulators of intracellular membrane trafficking, from the formation of transport vesicles to their fusion with membranes. Rabs cycle between active GTP-bound and inactive GDP-bound states. In their active state, drive transport of vesicular carriers from donor organelles to acceptor organelles to regulate the membrane traffic that maintains organelle identity and morphology. RAB2A regulates autophagy by promoting autophagosome-lysosome fusion via recruitment of the HOPS endosomal tethering complex; this process involves autophagosomal RAB2A and lysosomal RAB39A recruitment of HOPS subcomplexes VPS39-VPS11 and VPS41-VPS16-VPS18-VPS33A, respectively, which assemble into a functional complex to mediate membrane tethering and SNAREs-driven membrane fusion. Required for protein transport from the endoplasmic reticulum to the Golgi complex. Regulates the compacted morphology of the Golgi. Together with RAB2B, redundantly required for efficient autophagic flux. This Rattus norvegicus (Rat) protein is Ras-related protein Rab-2A (Rab2a).